A 118-amino-acid chain; its full sequence is UPF0102 protein Swit_0572 (118 aa).

This sequence belongs to the UPF0102 family.

The chain is UPF0102 protein Swit_0572 from Rhizorhabdus wittichii (strain DSM 6014 / CCUG 31198 / JCM 15750 / NBRC 105917 / EY 4224 / RW1) (Sphingomonas wittichii).